We begin with the raw amino-acid sequence, 150 residues long: D-aminoacyl-tRNA deacylase (150 aa).

The short motif at 138 to 139 is the Gly-cisPro motif, important for rejection of L-amino acids element; it reads GP.

The protein belongs to the DTD family. As to quaternary structure, homodimer.

It is found in the cytoplasm. It catalyses the reaction glycyl-tRNA(Ala) + H2O = tRNA(Ala) + glycine + H(+). It carries out the reaction a D-aminoacyl-tRNA + H2O = a tRNA + a D-alpha-amino acid + H(+). Its function is as follows. An aminoacyl-tRNA editing enzyme that deacylates mischarged D-aminoacyl-tRNAs. Also deacylates mischarged glycyl-tRNA(Ala), protecting cells against glycine mischarging by AlaRS. Acts via tRNA-based rather than protein-based catalysis; rejects L-amino acids rather than detecting D-amino acids in the active site. By recycling D-aminoacyl-tRNA to D-amino acids and free tRNA molecules, this enzyme counteracts the toxicity associated with the formation of D-aminoacyl-tRNA entities in vivo and helps enforce protein L-homochirality. The sequence is that of D-aminoacyl-tRNA deacylase from Christiangramia forsetii (strain DSM 17595 / CGMCC 1.15422 / KT0803) (Gramella forsetii).